We begin with the raw amino-acid sequence, 564 residues long: Protein glycosylation K (564 aa).

The Cytoplasmic segment spans residues 1–15 (MLKKLFFILSKEDKN). A helical membrane pass occupies residues 16-38 (FLFFLLVFSVFISFIETFAISLV). The ABC transmembrane type-1 domain occupies 17-319 (LFFLLVFSVF…IITSYHDLLY (303 aa)). At 39-76 (MPFITLASDFSYFDRNKYLISLKEYLNIPVFEIIVYFG) the chain is on the extracellular side. An important for stimulation of ATPase activity by lipid-linked oligosaccharides and subsequent translocation of lipid-linked oligosaccharides region spans residues 46 to 67 (SDFSYFDRNKYLISLKEYLNIP). Residues 77-98 (VGLIVFYVFRALLNAYYFHLLA) form a helical membrane-spanning segment. Over 99–149 (RFSKGRYHAIAYKVFSKFLNINYEKFTQKNQSEILKSITGEVYNLSTMISS) the chain is Cytoplasmic. A helical transmembrane segment spans residues 150–170 (FLLLMSEIFVVLLLYALMLLI). Residues 171-173 (NYK) lie on the Extracellular side of the membrane. A helical membrane pass occupies residues 174–197 (ITLFLSIFMVLNAFILVKILSPII). The Cytoplasmic segment spans residues 198–254 (KKAGVRREEAMKNFFEILNTNLNNFKFIKLKTKEDGVLSLFKAQSEAFSKANITNES). Residues 255-276 (VAAVPRIYLEGIGFCVLVFIVV) form a helical membrane-spanning segment. At 277–292 (FLVLKNESDISGILST) the chain is on the extracellular side. The helical transmembrane segment at 293–314 (ISIFVLALYRLMPSANRIITSY) threads the bilayer. The Cytoplasmic portion of the chain corresponds to 315 to 564 (HDLLYYHSSL…LEHGKLKEEK (250 aa)). The 216-residue stretch at 349-564 (LKICNLSFGY…LEHGKLKEEK (216 aa)) folds into the ABC transporter domain. 382-389 (GESGCGKS) is an ATP binding site.

Belongs to the ABC transporter superfamily. Homodimer; domain-swapped. Helices that arise in transmembrane regions 4 and 5 from one subunit cross over and contact the nucleotide-binding domain from the other subunit.

The protein resides in the cell inner membrane. It catalyses the reaction ATP + H2O + lipopolysaccharideSide 1 = ADP + phosphate + lipopolysaccharideSide 2.. It participates in protein modification; protein glycosylation. Functionally, mediates the ATP-dependent translocation of the undecaprenylpyrophosphate-linked heptasaccharide intermediate across the cell membrane; this is an essential step during the N-linked protein glycosylation pathway. Transport across the membrane is effected via ATP-driven conformation changes. Most likely, only the polar and charged part of the glycolipid enter the substrate-binding cavity, and the lipid tail remains exposed to the membrane lipids during the transmembrane flipping process. This Campylobacter jejuni subsp. jejuni serotype O:2 (strain ATCC 700819 / NCTC 11168) protein is Protein glycosylation K (pglK).